The sequence spans 1257 residues: LIM domain kinase 1 (1257 aa).

The disordered stretch occupies residues 1–24 (MHHQQRLRANGGRGGTGLGAGSGP). Residues 1-147 (MHHQQRLRAN…ERSKLYCGQC (147 aa)) are interaction with LATS1. Positions 11-24 (GGRGGTGLGAGSGP) are enriched in gly residues. LIM zinc-binding domains lie at 31-93 (PLCA…RFGD) and 94-154 (ACQQ…RSCQ). A PDZ domain is found at 174 to 274 (LVEIPKDATP…MLQLTVEHDP (101 aa)). Positions 401 to 686 (LVIGEKLGEG…PCFETLHVWL (286 aa)) constitute a Protein kinase domain. Residues 407–415 (LGEGFFGKV) and lysine 430 contribute to the ATP site. Aspartate 522 is an active-site residue. 3 disordered regions span residues 552 to 587 (LPSGNMTPGGYGSGANSDAPMSPSGTLRRSKSRQRR), 759 to 811 (QDIP…ERAL), and 881 to 900 (EELLEESTNKPSNQESQHHR). Basic and acidic residues predominate over residues 794–811 (QEERRNLTPDTESKERAL). Serine 1000 is modified (phosphoserine). Disordered stretches follow at residues 1010–1037 (AKQLATPAPKRSKATATTKGGQSSNPPL), 1085–1182 (SAQQ…EKVH), and 1212–1257 (AAGT…NTRC). Composition is skewed to polar residues over residues 1085–1095 (SAQQQRTSSNH) and 1113–1125 (RTGSQGIPASNCV). Composition is skewed to low complexity over residues 1126-1137 (SPTRSSRPGSPT) and 1145-1166 (TAATAQRLTNAAATHQQQHQQQ).

Belongs to the protein kinase superfamily. TKL Ser/Thr protein kinase family. In terms of assembly, interacts with LATS1, and this interaction inhibits phosphorylation of tsr/cofilin. Phosphorylated on serine and/or threonine residues by ROCK1. Phosphorylated by PAK4 resulting in increased LIMK1 ability to phosphorylate cofilin. May be dephosphorylated and inactivated by SSH1. Expressed throughout the imaginal disks of the eye, leg and wing.

The protein resides in the cytoplasm. It is found in the cleavage furrow. Its subcellular location is the midbody. The catalysed reaction is L-seryl-[protein] + ATP = O-phospho-L-seryl-[protein] + ADP + H(+). It carries out the reaction L-threonyl-[protein] + ATP = O-phospho-L-threonyl-[protein] + ADP + H(+). In terms of biological role, protein kinase which regulates actin filament dynamics. Phosphorylates and inactivates the actin binding/depolymerizing factor tsr/cofilin, thereby stabilizing the actin cytoskeleton. Modulation of actin cytoskeleton dynamics may be essential for imaginal disk morphogenesis and axon guidance. In Drosophila melanogaster (Fruit fly), this protein is LIM domain kinase 1 (LIMK1).